The primary structure comprises 313 residues: Ribosomal RNA small subunit methyltransferase H (313 aa).

S-adenosyl-L-methionine-binding positions include 35 to 37 (GGH), aspartate 55, phenylalanine 79, aspartate 100, and glutamine 107.

It belongs to the methyltransferase superfamily. RsmH family.

The protein localises to the cytoplasm. The enzyme catalyses cytidine(1402) in 16S rRNA + S-adenosyl-L-methionine = N(4)-methylcytidine(1402) in 16S rRNA + S-adenosyl-L-homocysteine + H(+). Specifically methylates the N4 position of cytidine in position 1402 (C1402) of 16S rRNA. The sequence is that of Ribosomal RNA small subunit methyltransferase H from Burkholderia mallei (strain NCTC 10247).